Here is a 205-residue protein sequence, read N- to C-terminus: Ypt/Rab-type GTPase ypt7 (205 aa).

GTP-binding positions include 17–23 (SGVGKTS), 33–40 (FSASYKAT), Gly66, 125–128 (NKID), and 157–159 (SAK). Residues 37-45 (YKATIGADF) carry the Effector region motif. Residues Cys203 and Cys205 are each lipidated (S-geranylgeranyl cysteine). Cys205 is subject to Cysteine methyl ester.

The protein belongs to the small GTPase superfamily. Rab family. As to quaternary structure, interacts with the Rab GDP dissociation inhibitor GDI1.

It localises to the vacuole. Rab activation is generally mediated by a guanine exchange factor (GEF), while inactivation through hydrolysis of bound GTP is catalyzed by a GTPase activating protein (GAP). In terms of biological role, ypt/Rab-type GTPases are key regulators of membrane trafficking and intracellular vesicular transport. They act as molecular switches that convert between GTP-bound and GDP-bound states, and regulate virtually all steps of membrane traffic from the formation of the transport vesicle at the donor membrane to its fusion at the target membrane. In the GDP-bound state, Ypt proteins are predominantly cytosolic, solubilized through the interaction with a GDP dissociation inhibitor (GDI). In the GTP-bound state, the proteins are membrane bound and interact with specific effector proteins that select cargo, promote vesicle movement, or verify the correct site of fusion. Required for fungal morphogenesis, vacuole fusion, autophagy, stress resistance and pathogenicity. The chain is Ypt/Rab-type GTPase ypt7 from Pyricularia oryzae (strain 70-15 / ATCC MYA-4617 / FGSC 8958) (Rice blast fungus).